Consider the following 761-residue polypeptide: Elongation factor G, mitochondrial (761 aa).

The transit peptide at 1 to 33 (MTSVLRGVLKTHLPRTLTLPRCARNFQTTTFLR) directs the protein to the mitochondrion. The 282-residue stretch at 66 to 347 (TRLRNIGISA…SVVDYLPQPN (282 aa)) folds into the tr-type G domain. Residues 75 to 82 (AHIDSGKT), 146 to 150 (DTPGH), and 200 to 203 (NKMD) contribute to the GTP site.

The protein belongs to the TRAFAC class translation factor GTPase superfamily. Classic translation factor GTPase family. EF-G/EF-2 subfamily.

The protein resides in the mitochondrion. It participates in protein biosynthesis; polypeptide chain elongation. Mitochondrial GTPase that catalyzes the GTP-dependent ribosomal translocation step during translation elongation. During this step, the ribosome changes from the pre-translocational (PRE) to the post-translocational (POST) state as the newly formed A-site-bound peptidyl-tRNA and P-site-bound deacylated tRNA move to the P and E sites, respectively. Catalyzes the coordinated movement of the two tRNA molecules, the mRNA and conformational changes in the ribosome. The polypeptide is Elongation factor G, mitochondrial (Candida dubliniensis (strain CD36 / ATCC MYA-646 / CBS 7987 / NCPF 3949 / NRRL Y-17841) (Yeast)).